Reading from the N-terminus, the 370-residue chain is Histidinol-phosphate aminotransferase 1 (370 aa).

Residue Lys222 is modified to N6-(pyridoxal phosphate)lysine.

The protein belongs to the class-II pyridoxal-phosphate-dependent aminotransferase family. Histidinol-phosphate aminotransferase subfamily. Homodimer. Pyridoxal 5'-phosphate serves as cofactor.

The enzyme catalyses L-histidinol phosphate + 2-oxoglutarate = 3-(imidazol-4-yl)-2-oxopropyl phosphate + L-glutamate. It participates in amino-acid biosynthesis; L-histidine biosynthesis; L-histidine from 5-phospho-alpha-D-ribose 1-diphosphate: step 7/9. This Bacillus cereus (strain ATCC 14579 / DSM 31 / CCUG 7414 / JCM 2152 / NBRC 15305 / NCIMB 9373 / NCTC 2599 / NRRL B-3711) protein is Histidinol-phosphate aminotransferase 1 (hisC1).